Here is a 188-residue protein sequence, read N- to C-terminus: Apolipoprotein M (188 aa).

Positions 1–22 form a signal peptide, not cleaved; that stretch reads MFHQIWAALLYLYGILLNSIYQ. Intrachain disulfides connect cysteine 23/cysteine 167, cysteine 95/cysteine 183, and cysteine 128/cysteine 157. Positions 136 and 143 each coordinate tetradecanoate.

The protein belongs to the calycin superfamily. Lipocalin family. Highly divergent. In terms of assembly, interacts with LRP2; LRP2 mediates APOM renal uptake and subsequent lysosomal degradation.

The protein localises to the secreted. Probably involved in lipid transport. Can bind sphingosine-1-phosphate, myristic acid, palmitic acid and stearic acid, retinol, all-trans-retinoic acid and 9-cis-retinoic acid. The polypeptide is Apolipoprotein M (APOM) (Sus scrofa (Pig)).